We begin with the raw amino-acid sequence, 416 residues long: Nuclear hormone receptor family member nhr-67 (416 aa).

Positions 18 to 98 (DVDCRVCEDH…IGMNKDAVQH (81 aa)) form a DNA-binding region, nuclear receptor. NR C4-type zinc fingers lie at residues 21–41 (CRVCEDHSSGKHYSIFSCDGC) and 57–86 (CKNKGSPSEGQCKVDKTHRNQCRACRLRKC). The segment at 331-398 (KTETEEGEDI…SSRPRHSIRS (68 aa)) is disordered. Positions 335–346 (EEGEDIEEEDDA) are enriched in acidic residues. A compositionally biased stretch (low complexity) spans 377–390 (SSTQPSSASSPSSS).

Belongs to the nuclear hormone receptor family. As to expression, expressed in linker cell.

The protein resides in the nucleus. Its function is as follows. Orphan nuclear receptor that binds DNA containing an extended core motif half-site sequence 5'-AAGTCA-3'. In males, plays an essential role in the migration of the linker cell which guides gonad elongation during the L3 and L4 stages of larval development by negatively regulating the expression of netrin receptor unc-5 at the mid-L3 stage. Involved in the regulation of non-apoptotic cell death in the linker cell, acting upstream of or in parallel to transcription factor hsf-1. Represses hypoxia response genes, fmo-2 and acs-2, in both normoxic and hypoxic conditions, probably acting via repression of nuclear receptor nhr-49. This chain is Nuclear hormone receptor family member nhr-67 (nhr-67), found in Caenorhabditis elegans.